The primary structure comprises 324 residues: MARRGKKKGRPISGWVIFDKPKGMGSTEAVSKIKWLFSAEKAGHAGTLDPLASGMLPIALGEATKTVPYVMDGTKVYRFTVTWGEERSTDDLEGQPTKTSDKRPSREEVEALLPDYTGVISQVPPQFSAIKIDGERAYDLAREGETVEIPTREVEIDRLEIVGFPDADRTEFEVECSKGTYVRSLARDMGRDLGCYGHISDLRRVEVAPFTDEDMVTLAKLEAVWPPLPPKDEDGNVIEPAPRRDFSALDALVIDTGAALDCLPQVPLSDDQAQRVRLGNPVILRGRDAPLEADEACVTTRGKLLAIGYIEHGQFKPKRVFTAG.

Residue aspartate 49 is the Nucleophile of the active site. Residues 87 to 107 (RSTDDLEGQPTKTSDKRPSRE) form a disordered region.

It belongs to the pseudouridine synthase TruB family. Type 1 subfamily.

It catalyses the reaction uridine(55) in tRNA = pseudouridine(55) in tRNA. Its function is as follows. Responsible for synthesis of pseudouridine from uracil-55 in the psi GC loop of transfer RNAs. This is tRNA pseudouridine synthase B from Brucella canis (strain ATCC 23365 / NCTC 10854 / RM-666).